Consider the following 201-residue polypeptide: Large ribosomal subunit protein uL4 (201 aa).

Residues 45-73 (AQKTRAEVTGSGKKPWRQKGTGRARAGSV) form a disordered region.

The protein belongs to the universal ribosomal protein uL4 family. In terms of assembly, part of the 50S ribosomal subunit.

One of the primary rRNA binding proteins, this protein initially binds near the 5'-end of the 23S rRNA. It is important during the early stages of 50S assembly. It makes multiple contacts with different domains of the 23S rRNA in the assembled 50S subunit and ribosome. Functionally, forms part of the polypeptide exit tunnel. The protein is Large ribosomal subunit protein uL4 of Yersinia pseudotuberculosis serotype O:1b (strain IP 31758).